Here is a 328-residue protein sequence, read N- to C-terminus: UPF0104 membrane protein AF_2231 (328 aa).

6 consecutive transmembrane segments (helical) span residues 31-51 (NWLL…LWAL), 116-136 (ILDS…TGFS), 139-159 (FGFK…YILY), 221-241 (LVTL…LVAL), 245-265 (AYFL…LVPL), and 277-297 (MAYL…VGLW).

Belongs to the UPF0104 family.

The protein resides in the cell membrane. The sequence is that of UPF0104 membrane protein AF_2231 from Archaeoglobus fulgidus (strain ATCC 49558 / DSM 4304 / JCM 9628 / NBRC 100126 / VC-16).